The primary structure comprises 329 residues: Mas-related G-protein coupled receptor member X2 (329 aa).

Residues 1-33 lie on the Extracellular side of the membrane; that stretch reads MDPTTPAWGTESTTMNGNDQALPLLCGKETMIS. Residues 34–54 traverse the membrane as a helical segment; that stretch reads VFLILFIALVGLVGNAFVLWL. At 55-63 the chain is on the cytoplasmic side; that stretch reads LGFRMRRNA. The helical transmembrane segment at 64–84 threads the bilayer; it reads FSVYVLSLAGADFLFLCFQMT. Topologically, residues 85-96 are extracellular; sequence SCLAYLINFFGS. A helical transmembrane segment spans residues 97–116; that stretch reads ISINIPSFFTVMTCAYLAGL. Topologically, residues 117-143 are cytoplasmic; that stretch reads SMLSAISTERCLSVLWPIWYRCRRPRH. A helical membrane pass occupies residues 144-164; the sequence is LSAVMCVLLWALSLLLSILEG. Over 165–183 the chain is Extracellular; it reads KFCGFLFSDDDPGWCQTFD. The chain crosses the membrane as a helical span at residues 184–204; it reads FITAAWLMFLFVVLCGSSLAL. Over 205–227 the chain is Cytoplasmic; it reads LVRILCGSRSLPLTRLYLTILLT. The chain crosses the membrane as a helical span at residues 228-248; sequence VLIFLLCGLPFGIQWFLILWI. The Extracellular portion of the chain corresponds to 249–263; it reads WKNSVVLFCHIHPIS. The helical transmembrane segment at 264-284 threads the bilayer; it reads VVLSSFNSSANPIIYFFVGSF. Residues 285 to 329 lie on the Cytoplasmic side of the membrane; sequence RKQWRLRQPILKLALQRALQDTAEVDHSEGCFSQGTLEMSRSSLV.

This sequence belongs to the G-protein coupled receptor 1 family. Mas subfamily.

It is found in the cell membrane. Mast cell-specific receptor for basic secretagogues, i.e. cationic amphiphilic drugs, as well as endo- or exogenous peptides, consisting of a basic head group and a hydrophobic core. Recognizes and binds small molecules containing a cyclized tetrahydroisoquinoline (THIQ), such as non-steroidal neuromuscular blocking drugs (NMBDs), including tubocurarine and atracurium. In response to these compounds, mediates pseudo-allergic reactions characterized by histamine release, inflammation and airway contraction. The protein is Mas-related G-protein coupled receptor member X2 (MRGPRX2) of Macaca mulatta (Rhesus macaque).